A 106-amino-acid polypeptide reads, in one-letter code: Apovitellenin-1 (106 aa).

The N-terminal stretch at M1–S24 is a signal peptide.

This sequence belongs to the apovitellenin family. Homodimer; disulfide-linked. As to expression, produced by the liver, secreted into the blood and then sequestred by receptor mediated endocytosis into growing oocytes.

Its function is as follows. Protein component of the very low density lipoprotein (VLDL) of egg-laying females. Potent lipoprotein lipase inhibitor, preventing the loss of triglycerides from VLDL on their way from the liver to the growing oocytes. The polypeptide is Apovitellenin-1 (Gallus gallus (Chicken)).